The chain runs to 257 residues: UPF0246 protein Sbal223_3241 (257 aa).

It belongs to the UPF0246 family.

In Shewanella baltica (strain OS223), this protein is UPF0246 protein Sbal223_3241.